A 463-amino-acid polypeptide reads, in one-letter code: Probable transport protein HsrA (463 aa).

The next 14 membrane-spanning stretches (helical) occupy residues 10–30, 49–69, 82–102, 107–127, 139–159, 165–185, 197–217, 225–245, 267–287, 298–318, 328–348, 354–374, 393–413, and 429–449; these read GLAW…TILN, MAII…AWAA, VFTF…ESLI, IQGI…IQAV, MATA…WLVI, WIFL…GSVM, WTGF…LDLL, SVTY…CGYA, IIAN…LPLM, MSGW…ILIG, TTLI…AWLD, TWII…FTSI, VLSI…SIIL, and AFSY…WSLM.

This sequence belongs to the major facilitator superfamily. EmrB family.

Its subcellular location is the cell inner membrane. In Haemophilus influenzae (strain ATCC 51907 / DSM 11121 / KW20 / Rd), this protein is Probable transport protein HsrA (hsrA).